The primary structure comprises 254 residues: Glutamate racemase (254 aa).

Residues 7–8 (DS) and 39–40 (YG) each bind substrate. Cys70 (proton donor/acceptor) is an active-site residue. Residues 71–72 (NT) and Glu147 contribute to the substrate site. Cys178 functions as the Proton donor/acceptor in the catalytic mechanism. A substrate-binding site is contributed by 179–180 (TH).

It belongs to the aspartate/glutamate racemases family. In terms of assembly, homodimer.

It catalyses the reaction L-glutamate = D-glutamate. It participates in cell wall biogenesis; peptidoglycan biosynthesis. Its function is as follows. Provides the (R)-glutamate required for cell wall biosynthesis. Converts L- or D-glutamate to D- or L-glutamate, respectively, but not other amino acids such as alanine, aspartate, and glutamine. This chain is Glutamate racemase, found in Aquifex pyrophilus.